We begin with the raw amino-acid sequence, 783 residues long: Endonuclease MutS2 (783 aa).

333–340 lines the ATP pocket; sequence GPNTGGKT. Residues 708–783 form the Smr domain; sequence IDLRGKNIEE…GLGATFIYLK (76 aa).

The protein belongs to the DNA mismatch repair MutS family. MutS2 subfamily. As to quaternary structure, homodimer. Binds to stalled ribosomes, contacting rRNA.

Endonuclease that is involved in the suppression of homologous recombination and thus may have a key role in the control of bacterial genetic diversity. Its function is as follows. Acts as a ribosome collision sensor, splitting the ribosome into its 2 subunits. Detects stalled/collided 70S ribosomes which it binds and splits by an ATP-hydrolysis driven conformational change. Acts upstream of the ribosome quality control system (RQC), a ribosome-associated complex that mediates the extraction of incompletely synthesized nascent chains from stalled ribosomes and their subsequent degradation. Probably generates substrates for RQC. The polypeptide is Endonuclease MutS2 (Finegoldia magna (strain ATCC 29328 / DSM 20472 / WAL 2508) (Peptostreptococcus magnus)).